Here is a 104-residue protein sequence, read N- to C-terminus: L-rhamnose mutarotase (104 aa).

Position 18 (Tyr18) interacts with substrate. His22 acts as the Proton donor in catalysis. Residues Tyr41 and 76 to 77 each bind substrate; that span reads WW.

Belongs to the rhamnose mutarotase family. Homodimer.

It localises to the cytoplasm. It carries out the reaction alpha-L-rhamnose = beta-L-rhamnose. Its pathway is carbohydrate metabolism; L-rhamnose metabolism. Involved in the anomeric conversion of L-rhamnose. The chain is L-rhamnose mutarotase from Enterobacter sp. (strain 638).